Reading from the N-terminus, the 146-residue chain is Ribonuclease H (146 aa).

The 143-residue stretch at 1 to 143 (MQKKIIVYTD…CDELARQAIK (143 aa)) folds into the RNase H type-1 domain. Residues aspartate 10, glutamate 48, aspartate 70, and aspartate 135 each coordinate Mg(2+).

It belongs to the RNase H family. As to quaternary structure, monomer. Mg(2+) serves as cofactor.

The protein resides in the cytoplasm. The catalysed reaction is Endonucleolytic cleavage to 5'-phosphomonoester.. Endonuclease that specifically degrades the RNA of RNA-DNA hybrids. This is Ribonuclease H from Chlorobium phaeobacteroides (strain DSM 266 / SMG 266 / 2430).